We begin with the raw amino-acid sequence, 336 residues long: Eukaryotic translation initiation factor 3 subunit I (336 aa).

5 WD repeats span residues Gly8 to Thr47, Gly50 to Glu91, Cys146 to Asn185, Glu190 to Thr229, and Gly287 to Met326.

Belongs to the eIF-3 subunit I family. As to quaternary structure, component of the eukaryotic translation initiation factor 3 (eIF-3) complex.

It is found in the cytoplasm. In terms of biological role, component of the eukaryotic translation initiation factor 3 (eIF-3) complex, which is involved in protein synthesis of a specialized repertoire of mRNAs and, together with other initiation factors, stimulates binding of mRNA and methionyl-tRNAi to the 40S ribosome. The eIF-3 complex specifically targets and initiates translation of a subset of mRNAs involved in cell proliferation. In Aspergillus terreus (strain NIH 2624 / FGSC A1156), this protein is Eukaryotic translation initiation factor 3 subunit I (tif34).